The primary structure comprises 353 residues: Photosystem II protein D1 (353 aa).

Thr2 bears the N-acetylthreonine mark. Phosphothreonine is present on Thr2. The next 3 helical transmembrane spans lie at 29–46 (YIGW…TATS), 118–133 (HFLL…EWEL), and 142–156 (WIAV…AATA). His118 contacts chlorophyll a. Tyr126 contributes to the pheophytin a binding site. [CaMn4O5] cluster is bound by residues Asp170 and Glu189. A helical transmembrane segment spans residues 197–218 (FHMLGVAGVFGGSLFSAMHGSL). His198 lines the chlorophyll a pocket. A quinone is bound by residues His215 and 264–265 (SF). His215 lines the Fe cation pocket. His272 contributes to the Fe cation binding site. The helical transmembrane segment at 274–288 (FLAAWPVIGIWFTAL) threads the bilayer. Positions 332, 333, 342, and 344 each coordinate [CaMn4O5] cluster. A propeptide spanning residues 345–353 (AIEAPSTNG) is cleaved from the precursor.

It belongs to the reaction center PufL/M/PsbA/D family. In terms of assembly, PSII is composed of 1 copy each of membrane proteins PsbA, PsbB, PsbC, PsbD, PsbE, PsbF, PsbH, PsbI, PsbJ, PsbK, PsbL, PsbM, PsbT, PsbX, PsbY, PsbZ, Psb30/Ycf12, at least 3 peripheral proteins of the oxygen-evolving complex and a large number of cofactors. It forms dimeric complexes. The D1/D2 heterodimer binds P680, chlorophylls that are the primary electron donor of PSII, and subsequent electron acceptors. It shares a non-heme iron and each subunit binds pheophytin, quinone, additional chlorophylls, carotenoids and lipids. D1 provides most of the ligands for the Mn4-Ca-O5 cluster of the oxygen-evolving complex (OEC). There is also a Cl(-1) ion associated with D1 and D2, which is required for oxygen evolution. The PSII complex binds additional chlorophylls, carotenoids and specific lipids. serves as cofactor. Post-translationally, tyr-161 forms a radical intermediate that is referred to as redox-active TyrZ, YZ or Y-Z. C-terminally processed by CTPA; processing is essential to allow assembly of the oxygen-evolving complex and thus photosynthetic growth.

Its subcellular location is the plastid. It is found in the chloroplast thylakoid membrane. The catalysed reaction is 2 a plastoquinone + 4 hnu + 2 H2O = 2 a plastoquinol + O2. In terms of biological role, photosystem II (PSII) is a light-driven water:plastoquinone oxidoreductase that uses light energy to abstract electrons from H(2)O, generating O(2) and a proton gradient subsequently used for ATP formation. It consists of a core antenna complex that captures photons, and an electron transfer chain that converts photonic excitation into a charge separation. The D1/D2 (PsbA/PsbD) reaction center heterodimer binds P680, the primary electron donor of PSII as well as several subsequent electron acceptors. The polypeptide is Photosystem II protein D1 (Amaranthus hybridus (Slim amaranth)).